Consider the following 134-residue polypeptide: Retinoid-binding protein 7 (134 aa).

It belongs to the calycin superfamily. Fatty-acid binding protein (FABP) family. In terms of tissue distribution, expressed primarily in kidney, heart and transverse colon. Detected in adult lymph node, appendix, ascending colon, and in fetal heart and spleen.

The protein localises to the cytoplasm. Its function is as follows. Intracellular transport of retinol. The chain is Retinoid-binding protein 7 (RBP7) from Homo sapiens (Human).